The chain runs to 86 residues: Large ribosomal subunit protein bL31B (86 aa).

The protein belongs to the bacterial ribosomal protein bL31 family. Type B subfamily. As to quaternary structure, part of the 50S ribosomal subunit.

This is Large ribosomal subunit protein bL31B from Yersinia pseudotuberculosis serotype O:1b (strain IP 31758).